Reading from the N-terminus, the 138-residue chain is Small ribosomal subunit protein uS11c (138 aa).

The disordered stretch occupies residues 1-23 (MAKAIPRRSSRRNGRIGSRKSAR).

The protein belongs to the universal ribosomal protein uS11 family. In terms of assembly, part of the 30S ribosomal subunit.

It is found in the plastid. It localises to the chloroplast. The protein is Small ribosomal subunit protein uS11c of Ipomoea purpurea (Common morning glory).